The following is a 286-amino-acid chain: Ribosome-inactivating protein momordin II (286 aa).

Residues 1-23 (MVKCLLLSFLIIAIFIGVPTAKG) form the signal peptide. Residue Glu-181 is part of the active site.

It belongs to the ribosome-inactivating protein family. Type 1 RIP subfamily.

The enzyme catalyses Endohydrolysis of the N-glycosidic bond at one specific adenosine on the 28S rRNA.. The polypeptide is Ribosome-inactivating protein momordin II (Momordica balsamina (Bitter gourd)).